The primary structure comprises 74 residues: U3-agatoxin-Ao1h (74 aa).

A signal peptide spans 1 to 20 (MRAIISLLLISTMVFGVIEA). A propeptide spanning residues 21-34 (VSVQKSLKIFEGER) is cleaved from the precursor. Disulfide bonds link cysteine 37/cysteine 53, cysteine 44/cysteine 58, cysteine 52/cysteine 68, and cysteine 60/cysteine 66. Asparagine 72 bears the Asparagine amide mark.

Belongs to the neurotoxin 07 (Beta/delta-agtx) family. 03 (aga-4) subfamily. Aga sub-subfamily. As to expression, expressed by the venom gland.

It is found in the secreted. Insecticidal neurotoxin that induces an irreversible spastic paralysis when injected into insects. Modifies presynaptic voltage-gated sodium channels (Nav), causing them to open at the normal resting potential of the nerve. This leads to spontaneous release of neurotransmitter and repetitive action potentials in motor neurons. In Agelena orientalis (Funnel-web spider), this protein is U3-agatoxin-Ao1h.